The primary structure comprises 404 residues: Tryptophan synthase beta chain (404 aa).

Residue Lys98 is modified to N6-(pyridoxal phosphate)lysine.

It belongs to the TrpB family. As to quaternary structure, tetramer of two alpha and two beta chains. Pyridoxal 5'-phosphate is required as a cofactor.

The enzyme catalyses (1S,2R)-1-C-(indol-3-yl)glycerol 3-phosphate + L-serine = D-glyceraldehyde 3-phosphate + L-tryptophan + H2O. It participates in amino-acid biosynthesis; L-tryptophan biosynthesis; L-tryptophan from chorismate: step 5/5. Functionally, the beta subunit is responsible for the synthesis of L-tryptophan from indole and L-serine. The sequence is that of Tryptophan synthase beta chain from Rhodopseudomonas palustris (strain BisB18).